Here is a 417-residue protein sequence, read N- to C-terminus: Peptidyl-Asp metalloendopeptidase (417 aa).

Residues 1–23 form the signal peptide; that stretch reads MKSKSMCTTVGLIAMCLAGSAAA. His331 serves as a coordination point for Zn(2+). Glu332 is a catalytic residue. Zn(2+)-binding residues include His335 and His341.

This sequence belongs to the peptidase M72 family. Requires Zn(2+) as cofactor.

The enzyme catalyses Cleavage of Xaa-|-Asp, Xaa-|-Glu and Xaa-|-cysteic acid bonds.. In terms of biological role, metalloprotease, specifically cleaves on the N-terminal side of aspartyl, glutamyl and cysteic acid residues. This Xanthomonas campestris pv. campestris (strain ATCC 33913 / DSM 3586 / NCPPB 528 / LMG 568 / P 25) protein is Peptidyl-Asp metalloendopeptidase.